The sequence spans 427 residues: Adenylosuccinate synthetase (427 aa).

GTP is bound by residues 11 to 17 (GDEGKGK) and 39 to 41 (GHT). Asp12 functions as the Proton acceptor in the catalytic mechanism. The Mg(2+) site is built by Asp12 and Gly39. IMP is bound by residues 12–15 (DEGK), 37–40 (NAGH), Thr132, Arg146, Gln223, Thr238, and Arg302. His40 serves as the catalytic Proton donor. A substrate-binding site is contributed by 298–304 (TTTGRPR). GTP contacts are provided by residues Arg304, 330–332 (KLD), and 412–414 (GVG).

This sequence belongs to the adenylosuccinate synthetase family. Homodimer. It depends on Mg(2+) as a cofactor.

Its subcellular location is the cytoplasm. The enzyme catalyses IMP + L-aspartate + GTP = N(6)-(1,2-dicarboxyethyl)-AMP + GDP + phosphate + 2 H(+). The protein operates within purine metabolism; AMP biosynthesis via de novo pathway; AMP from IMP: step 1/2. Functionally, plays an important role in the de novo pathway and in the salvage pathway of purine nucleotide biosynthesis. Catalyzes the first committed step in the biosynthesis of AMP from IMP. The polypeptide is Adenylosuccinate synthetase (purA) (Dictyostelium discoideum (Social amoeba)).